The sequence spans 203 residues: Urease accessory protein UreG (203 aa).

Position 12–19 (12–19 (GPVGSGKT)) interacts with GTP.

The protein belongs to the SIMIBI class G3E GTPase family. UreG subfamily. In terms of assembly, homodimer. UreD, UreF and UreG form a complex that acts as a GTP-hydrolysis-dependent molecular chaperone, activating the urease apoprotein by helping to assemble the nickel containing metallocenter of UreC. The UreE protein probably delivers the nickel.

The protein resides in the cytoplasm. Facilitates the functional incorporation of the urease nickel metallocenter. This process requires GTP hydrolysis, probably effectuated by UreG. In Nitrosococcus oceani (strain ATCC 19707 / BCRC 17464 / JCM 30415 / NCIMB 11848 / C-107), this protein is Urease accessory protein UreG.